A 206-amino-acid polypeptide reads, in one-letter code: Large ribosomal subunit protein uL4 (206 aa).

It belongs to the universal ribosomal protein uL4 family. As to quaternary structure, part of the 50S ribosomal subunit.

Its function is as follows. One of the primary rRNA binding proteins, this protein initially binds near the 5'-end of the 23S rRNA. It is important during the early stages of 50S assembly. It makes multiple contacts with different domains of the 23S rRNA in the assembled 50S subunit and ribosome. Forms part of the polypeptide exit tunnel. This is Large ribosomal subunit protein uL4 from Nitratidesulfovibrio vulgaris (strain ATCC 29579 / DSM 644 / CCUG 34227 / NCIMB 8303 / VKM B-1760 / Hildenborough) (Desulfovibrio vulgaris).